Reading from the N-terminus, the 141-residue chain is Large-conductance mechanosensitive channel (141 aa).

The next 3 helical transmembrane spans lie at 17-37 (MDLA…ASIV), 40-60 (LIMP…LFIA), and 86-106 (GNFV…FIIV).

Belongs to the MscL family. Homopentamer.

Its subcellular location is the cell inner membrane. In terms of biological role, channel that opens in response to stretch forces in the membrane lipid bilayer. May participate in the regulation of osmotic pressure changes within the cell. The sequence is that of Large-conductance mechanosensitive channel from Thiobacillus denitrificans (strain ATCC 25259 / T1).